Reading from the N-terminus, the 679-residue chain is FAST kinase domain-containing protein 2, mitochondrial (679 aa).

Phosphoserine occurs at positions 113 and 126. The RAP domain occupies 607 to 664 (VAVLCVPKSAYCLNSNHLRGLMAMKIRHLNVMGFHVILIHNWELKKLKMEDAVTFVRK).

It belongs to the FAST kinase family. In terms of assembly, monomer. Found in a complex with GRSF1, DDX28, DHX30 and FASTKD5. Associates with the 16S mitochondrial rRNA (16S mt-rRNA). Forms a regulatory protein-RNA complex, consisting of RCC1L, NGRN, RPUSD3, RPUSD4, TRUB2, FASTKD2 and 16S mt-rRNA.

It localises to the mitochondrion matrix. Its subcellular location is the mitochondrion nucleoid. Functionally, plays an important role in assembly of the mitochondrial large ribosomal subunit. As a component of a functional protein-RNA module, consisting of RCC1L, NGRN, RPUSD3, RPUSD4, TRUB2, FASTKD2 and 16S mitochondrial ribosomal RNA (16S mt-rRNA), controls 16S mt-rRNA abundance and is required for intra-mitochondrial translation. May play a role in mitochondrial apoptosis. In Rattus norvegicus (Rat), this protein is FAST kinase domain-containing protein 2, mitochondrial (Fastkd2).